We begin with the raw amino-acid sequence, 126 residues long: MSALDNSIRVEVKTEYIEQQSSPEDEKYLFSYTITIINLGEQAAKLETRHWIITDANGKTSEVQGAGVVGETPTIPPNTAYQYTSGTVLDTPFGIMYGTYGMVSESGEHFNAIIKPFRLATPGLLH.

The 125-residue stretch at 2 to 126 (SALDNSIRVE…FRLATPGLLH (125 aa)) folds into the ApaG domain.

This chain is Protein ApaG, found in Shewanella oneidensis (strain ATCC 700550 / JCM 31522 / CIP 106686 / LMG 19005 / NCIMB 14063 / MR-1).